Here is a 100-residue protein sequence, read N- to C-terminus: Pancreatic polypeptide prohormone (100 aa).

The signal sequence occupies residues 1–29 (MAVAYCCLSLFLVSTWVALLLQPLQGTWG). Position 65 is a tyrosine amide (Tyr65).

The protein belongs to the NPY family. Post-translationally, no icosapeptide-like peptide is cleaved from the C-terminal.

It is found in the secreted. Its function is as follows. Hormone secreted by pancreatic cells that acts as a regulator of pancreatic and gastrointestinal functions probably by signaling through the G protein-coupled receptor NPY4R2. This Mus musculus (Mouse) protein is Pancreatic polypeptide prohormone (Ppy).